A 279-amino-acid polypeptide reads, in one-letter code: Acyl-[acyl-carrier-protein]--UDP-N-acetylglucosamine O-acyltransferase (279 aa).

A disordered region spans residues 260-279 (AAKEAFQEESVDKEGALVES).

This sequence belongs to the transferase hexapeptide repeat family. LpxA subfamily. Homotrimer.

The protein localises to the cytoplasm. The catalysed reaction is a (3R)-hydroxyacyl-[ACP] + UDP-N-acetyl-alpha-D-glucosamine = a UDP-3-O-[(3R)-3-hydroxyacyl]-N-acetyl-alpha-D-glucosamine + holo-[ACP]. It participates in glycolipid biosynthesis; lipid IV(A) biosynthesis; lipid IV(A) from (3R)-3-hydroxytetradecanoyl-[acyl-carrier-protein] and UDP-N-acetyl-alpha-D-glucosamine: step 1/6. In terms of biological role, involved in the biosynthesis of lipid A, a phosphorylated glycolipid that anchors the lipopolysaccharide to the outer membrane of the cell. The chain is Acyl-[acyl-carrier-protein]--UDP-N-acetylglucosamine O-acyltransferase from Chlamydia abortus (strain DSM 27085 / S26/3) (Chlamydophila abortus).